The following is a 631-amino-acid chain: MNVLIYNGNGASKICLLRTFQSLLPFVVPLYAMRFVDASTLEKEPWPASTALLVMPGGRDMGYCSSFNETIYRKITDFVKRGGAYLGLCAGGYFGSAVVDFRMPDSDLNVVGKRKLQFFPGTCAGPTFPGFTYDSEDGARRASIIVDGMQSSPVHTHIYFNGGGSFLETENYSNVKVVARYQETDFEKSAAIIYVKVGKGNVVLTGIHPEFSAEGSPILDKRDEKTRLELLSYILKLLGLKVPKDTSKCGQPTLTDQYLFPNNVETKRFIEKALTNKVKNQDEDTLYTFQFSDISSEIPEHQLANLDISADLSDSDNEIVKIWYGDEEKICKKAKPSFDLELYAKLINGCRFGLPIIVAPVIRSTQTLLDKNYRFLDSTNTGFTVLGNYQTAGRGRGQNMWVSPYGTLAFSFIINVDAKNFSTTPIALFQYLMALAVVRGIREYAPGYENIPAFIKWPNDVYVRVDKGGINFQGKQYMKLSGIIVTSNYRKNVLHLVVGCGINVSNLGPTVSLNTLVDEWNKNSDNPRLEKFSFEKLLASVLNQFDRYHRLLLEEGFSLILPEYYQYWLHSNQTVNLASGGKAIIQGITSDFGFLLAQLLNENNEPTTKVVHLQPDGNSFDLMRNLITRKT.

The BPL/LPL catalytic domain occupies 341–553; it reads ELYAKLINGC…QFDRYHRLLL (213 aa).

This sequence belongs to the biotin--protein ligase family. Monomer.

It is found in the cytoplasm. It catalyses the reaction apo-[methylmalonyl-CoA:pyruvate carboxytransferase] + biotin + ATP = holo-[methylmalonyl-CoA:pyruvate carboxytransferase] + AMP + diphosphate + H(+). The catalysed reaction is apo-[propionyl-CoA:carbon-dioxide ligase (ADP-forming)] + biotin + ATP = holo-[propionyl-CoA:carbon-dioxide ligase (ADP-forming)] + AMP + diphosphate + H(+). It carries out the reaction apo-[3-methylcrotonoyl-CoA:carbon-dioxide ligase (ADP-forming)] + biotin + ATP = holo-[3-methylcrotonoyl-CoA:carbon-dioxide ligase (ADP-forming)] + AMP + diphosphate + H(+). The enzyme catalyses biotin + L-lysyl-[protein] + ATP = N(6)-biotinyl-L-lysyl-[protein] + AMP + diphosphate + H(+). In terms of biological role, post-translational modification of specific protein by attachment of biotin. Acts on various carboxylases such as acetyl-CoA-carboxylase, pyruvate carboxylase, propionyl CoA carboxylase, and 3-methylcrotonyl CoA carboxylase. This Schizosaccharomyces pombe (strain 972 / ATCC 24843) (Fission yeast) protein is Biotin--protein ligase (bpl1).